We begin with the raw amino-acid sequence, 170 residues long: uncharacterized protein (170 aa).

This is an uncharacterized protein from Aquifex aeolicus (strain VF5).